Here is a 318-residue protein sequence, read N- to C-terminus: MAHQRIVGPTIECIESRIESRRNHYGRFVIAPLEIGQGITVGNVFRRVLLGDLEGACITSVQIPGVNHEFSTIHGVREAVLDILLNLKEIVLKTQSQETQRGHLSVQGPSTVLARDLQLPSSIELVDPDQYIATISGRVSLNMEFTVEVGKGYQLPDYEKKKTFQVDVLPIDAVFMPVTKVNYTVEENYGGDRSQERVIIEVWTNGSINSRQAIDLSVNKIINLFSPLQNVRSIEHEPLVKEKDSKMTEVLVEELDLSVRAYNCLKRAQIHTVSDLLSYSQEDLLEIKNFGRRSAEEVIEGLQKRLGIHLPKEKFTKD.

Residues 1-232 (MAHQRIVGPT…NLFSPLQNVR (232 aa)) are alpha N-terminal domain (alpha-NTD). The segment at 246–318 (KMTEVLVEEL…HLPKEKFTKD (73 aa)) is alpha C-terminal domain (alpha-CTD).

This sequence belongs to the RNA polymerase alpha chain family. In terms of assembly, in plastids the minimal PEP RNA polymerase catalytic core is composed of four subunits: alpha, beta, beta', and beta''. When a (nuclear-encoded) sigma factor is associated with the core the holoenzyme is formed, which can initiate transcription.

It is found in the plastid. The protein localises to the chloroplast. It catalyses the reaction RNA(n) + a ribonucleoside 5'-triphosphate = RNA(n+1) + diphosphate. DNA-dependent RNA polymerase catalyzes the transcription of DNA into RNA using the four ribonucleoside triphosphates as substrates. The chain is DNA-directed RNA polymerase subunit alpha from Chlorokybus atmophyticus (Soil alga).